The sequence spans 305 residues: Elongation factor Ts (305 aa).

An involved in Mg(2+) ion dislocation from EF-Tu region spans residues 79 to 82 (TDFV).

Belongs to the EF-Ts family.

It localises to the cytoplasm. In terms of biological role, associates with the EF-Tu.GDP complex and induces the exchange of GDP to GTP. It remains bound to the aminoacyl-tRNA.EF-Tu.GTP complex up to the GTP hydrolysis stage on the ribosome. The chain is Elongation factor Ts from Brucella suis biovar 1 (strain 1330).